A 58-amino-acid chain; its full sequence is uncharacterized protein (58 aa).

This is an uncharacterized protein from Treponema pallidum (strain Nichols).